Here is a 240-residue protein sequence, read N- to C-terminus: Probable phosphatase Athe_0620 (240 aa).

Zn(2+) contacts are provided by His-8, His-10, His-16, His-41, Glu-74, His-102, His-132, Asp-192, and His-194.

The protein belongs to the PHP family. Zn(2+) serves as cofactor.

The sequence is that of Probable phosphatase Athe_0620 from Caldicellulosiruptor bescii (strain ATCC BAA-1888 / DSM 6725 / KCTC 15123 / Z-1320) (Anaerocellum thermophilum).